The primary structure comprises 149 residues: D-aminoacyl-tRNA deacylase (149 aa).

Positions 137–138 (GP) match the Gly-cisPro motif, important for rejection of L-amino acids motif.

The protein belongs to the DTD family. Homodimer.

The protein resides in the cytoplasm. The catalysed reaction is glycyl-tRNA(Ala) + H2O = tRNA(Ala) + glycine + H(+). It carries out the reaction a D-aminoacyl-tRNA + H2O = a tRNA + a D-alpha-amino acid + H(+). In terms of biological role, an aminoacyl-tRNA editing enzyme that deacylates mischarged D-aminoacyl-tRNAs. Also deacylates mischarged glycyl-tRNA(Ala), protecting cells against glycine mischarging by AlaRS. Acts via tRNA-based rather than protein-based catalysis; rejects L-amino acids rather than detecting D-amino acids in the active site. By recycling D-aminoacyl-tRNA to D-amino acids and free tRNA molecules, this enzyme counteracts the toxicity associated with the formation of D-aminoacyl-tRNA entities in vivo and helps enforce protein L-homochirality. This chain is D-aminoacyl-tRNA deacylase, found in Clostridium botulinum (strain Eklund 17B / Type B).